Reading from the N-terminus, the 226-residue chain is Thiopurine S-methyltransferase (226 aa).

S-adenosyl-L-methionine is bound by residues Trp-16, Met-51, Glu-72, and Arg-131.

Belongs to the class I-like SAM-binding methyltransferase superfamily. TPMT family.

It is found in the cytoplasm. It catalyses the reaction S-adenosyl-L-methionine + a thiopurine = S-adenosyl-L-homocysteine + a thiopurine S-methylether.. This Francisella tularensis subsp. novicida (strain U112) protein is Thiopurine S-methyltransferase.